The following is a 190-amino-acid chain: Elongation factor P-like protein (190 aa).

Belongs to the elongation factor P family.

In Photorhabdus laumondii subsp. laumondii (strain DSM 15139 / CIP 105565 / TT01) (Photorhabdus luminescens subsp. laumondii), this protein is Elongation factor P-like protein.